The following is a 52-amino-acid chain: MDKYECSICGYIYDEAEGDDGNVAAGTKFADLPADWVCPTCGADKDAFVKMD.

The Rubredoxin-like domain maps to 1–51 (MDKYECSICGYIYDEAEGDDGNVAAGTKFADLPADWVCPTCGADKDAFVKM). Fe cation is bound by residues Cys-6, Cys-9, Cys-38, and Cys-41.

It belongs to the rubredoxin family. Requires Fe(3+) as cofactor.

In terms of biological role, rubredoxin is a small nonheme, iron protein lacking acid-labile sulfide. Its single Fe, chelated to 4 Cys, functions as an electron acceptor and may also stabilize the conformation of the molecule. The polypeptide is Rubredoxin (Megasphaera elsdenii).